A 525-amino-acid polypeptide reads, in one-letter code: tRNA(Ile)-lysidine synthase (525 aa).

S32–S37 contacts ATP.

Belongs to the tRNA(Ile)-lysidine synthase family.

The protein resides in the cytoplasm. The catalysed reaction is cytidine(34) in tRNA(Ile2) + L-lysine + ATP = lysidine(34) in tRNA(Ile2) + AMP + diphosphate + H(+). In terms of biological role, ligates lysine onto the cytidine present at position 34 of the AUA codon-specific tRNA(Ile) that contains the anticodon CAU, in an ATP-dependent manner. Cytidine is converted to lysidine, thus changing the amino acid specificity of the tRNA from methionine to isoleucine. This is tRNA(Ile)-lysidine synthase from Psychrobacter sp. (strain PRwf-1).